The chain runs to 341 residues: Anthranilate phosphoribosyltransferase (341 aa).

Residues glycine 79, 82–83 (GD), threonine 87, 89–92 (NIST), 107–115 (KHGGRSVSS), and serine 119 contribute to the 5-phospho-alpha-D-ribose 1-diphosphate site. Residue glycine 79 coordinates anthranilate. Residue serine 91 participates in Mg(2+) binding. Arginine 165 provides a ligand contact to anthranilate. Mg(2+) contacts are provided by aspartate 224 and glutamate 225.

It belongs to the anthranilate phosphoribosyltransferase family. In terms of assembly, homodimer. Mg(2+) serves as cofactor.

The enzyme catalyses N-(5-phospho-beta-D-ribosyl)anthranilate + diphosphate = 5-phospho-alpha-D-ribose 1-diphosphate + anthranilate. Its pathway is amino-acid biosynthesis; L-tryptophan biosynthesis; L-tryptophan from chorismate: step 2/5. Catalyzes the transfer of the phosphoribosyl group of 5-phosphorylribose-1-pyrophosphate (PRPP) to anthranilate to yield N-(5'-phosphoribosyl)-anthranilate (PRA). The sequence is that of Anthranilate phosphoribosyltransferase from Ruminiclostridium cellulolyticum (strain ATCC 35319 / DSM 5812 / JCM 6584 / H10) (Clostridium cellulolyticum).